The following is a 173-amino-acid chain: dCTP deaminase, dUMP-forming (173 aa).

DCTP is bound by residues 93–98 (RSSTGR), Asp111, 119–121 (TLE), Gln138, and Tyr151. The active-site Proton donor/acceptor is Glu121.

Belongs to the dCTP deaminase family. Homotrimer.

The enzyme catalyses dCTP + 2 H2O = dUMP + NH4(+) + diphosphate. It functions in the pathway pyrimidine metabolism; dUMP biosynthesis; dUMP from dCTP: step 1/1. In terms of biological role, bifunctional enzyme that catalyzes both the deamination of dCTP to dUTP and the hydrolysis of dUTP to dUMP without releasing the toxic dUTP intermediate. The sequence is that of dCTP deaminase, dUMP-forming from Clostridium botulinum (strain Alaska E43 / Type E3).